The following is an 811-amino-acid chain: Serine/threonine-protein kinase prpf4B (811 aa).

4 disordered regions span residues 1–257, 288–341, 353–379, and 408–452; these read MVIE…TNEP, EKYN…NQIE, KDQNSENSSAFNDNNNDESCSSEEDLK, and VSIK…TNGG. Over residues 46 to 71 the composition is skewed to low complexity; sequence SSPASRETSSSKLMSPSKNQSSSSSR. Over residues 81–202 the composition is skewed to basic and acidic residues; that stretch reads RRKDERYSSS…DNMDSRDNKN (122 aa). The segment covering 203-215 has biased composition (polar residues); it reads GSRQSINNNTLSY. Basic and acidic residues predominate over residues 217–240; that stretch reads KQADRKDEVRVKDNISVNDDKTNH. 2 stretches are compositionally biased toward polar residues: residues 241-257 and 293-302; these read GENLTNESITATSTNEP and EQPQPITSSL. A compositionally biased stretch (low complexity) spans 310 to 327; sequence SNTNTNSNSTPVATTTTS. The Protein kinase domain maps to 490 to 808; that stretch reads YQIFSPIGSG…PFEALNHEFL (319 aa). ATP is bound by residues 496 to 504 and K519; that span reads IGSGVFSTV. D619 (proton acceptor) is an active-site residue.

This sequence belongs to the protein kinase superfamily. CMGC Ser/Thr protein kinase family. In terms of processing, phosphorylated. Autophosphorylated; phosphorylation inhibits interaction with its targets.

The protein resides in the nucleus. Its subcellular location is the chromosome. The protein localises to the centromere. It localises to the kinetochore. The enzyme catalyses L-seryl-[protein] + ATP = O-phospho-L-seryl-[protein] + ADP + H(+). It catalyses the reaction L-threonyl-[protein] + ATP = O-phospho-L-threonyl-[protein] + ADP + H(+). Its function is as follows. Serine/threonine kinase involved in spliceosomal assembly as well as mitosis and signaling regulation. This Dictyostelium discoideum (Social amoeba) protein is Serine/threonine-protein kinase prpf4B (prp4k).